A 212-amino-acid polypeptide reads, in one-letter code: Troponin I, cardiac muscle (212 aa).

The segment covering 1-11 (MADRSGGSTAG) has biased composition (polar residues). Residues 1–45 (MADRSGGSTAGDTVPAPPPVRRRSSANYRAYATEPHAKKKSKISA) are disordered. Alanine 2 is modified (N-acetylalanine). Serine 5 bears the Phosphoserine mark. Phosphoserine; by PKA and PKD/PRKD1 is present on residues serine 24 and serine 25. Tyrosine 28 carries the post-translational modification Phosphotyrosine. Threonine 33 is subject to Phosphothreonine; by STK4/MST1. An involved in binding TNC region spans residues 34 to 81 (EPHAKKKSKISASRKLQLKTLMLQIAKQELEREAEERRGEKGRALSTR). Phosphoserine; by PKC/PRKCE is present on residues serine 44 and serine 46. At threonine 53 the chain carries Phosphothreonine; by STK4/MST1. Serine 79 carries the phosphoserine modification. A Phosphothreonine modification is found at threonine 80. Residues 131–151 (NQKIFDLRGKFKRPTLRRVRI) are involved in binding TNC and actin. Threonine 145 bears the Phosphothreonine; by STK4/MST1 mark. At serine 152 the chain carries Phosphoserine; by PAK3. Threonine 183 is subject to Phosphothreonine. The residue at position 201 (serine 201) is a Phosphoserine.

It belongs to the troponin I family. In terms of assembly, interacts with TRIM63. Binds to actin and tropomyosin. Interacts with STK4/MST1. Post-translationally, phosphorylated at Ser-24 and Ser-25 by PRKD1; phosphorylation reduces myofilament calcium sensitivity. Phosphorylated preferentially at Thr-33. Phosphorylation by STK4/MST1 alters its binding affinity to TNNC1 (cardiac Tn-C) and TNNT2 (cardiac Tn-T). Phosphorylated at Ser-44 and Ser-46 by PRKCE; phosphorylation increases myocardium contractile dysfunction.

Functionally, troponin I is the inhibitory subunit of troponin, the thin filament regulatory complex which confers calcium-sensitivity to striated muscle actomyosin ATPase activity. The chain is Troponin I, cardiac muscle (TNNI3) from Bos taurus (Bovine).